The following is a 664-amino-acid chain: E3 ubiquitin-protein ligase RNF139 (664 aa).

The residue at position 2 (Ala-2) is an N-acetylalanine. 12 helical membrane-spanning segments follow: residues 51–71 (IVLQIFLRLFGVFASSIVLIL), 85–105 (AFLLAATSVLVNYYASLHIDF), 125–145 (SLWMALIVLQLTFGIGYVTLL), 154–174 (LIILDLLVPVIGLITELPLHI), 178–198 (LLFTSSLILTLNTVFVLAVKL), 293–313 (GMSAVISSVAHYLGLGILAFI), 323–343 (LGFVAPVLFFILALQTGLSGL), 356–376 (MCLLLTAVLHFIHGMTDPVLM), 390–410 (FPVLFVSACLFILPVLLSYVL), 420–440 (LFAVTAFCVELCLKVIVSLTV), 469–489 (SIIEFIFGVVMFGNGAYTMMF), and 495–512 (IRAFMMCLHAYFNIYLQA). The segment at 547-586 (CAICYHEFTTSARITPCNHYFHALCLRKWLYIQDTCPMCH) adopts an RING-type; atypical zinc-finger fold. The interval 601–664 (VSNNNGFIPP…AAEEFNDDTD (64 aa)) is disordered. The span at 616 to 628 (EAVREAAAESDRE) shows a compositional bias: basic and acidic residues. The segment covering 629–639 (LNEDDSTDCDD) has biased composition (acidic residues). The residue at position 634 (Ser-634) is a Phosphoserine. Thr-635 and Thr-663 each carry phosphothreonine.

In terms of assembly, interacts with MHC class I and HM13. Interacts with VHL. Component of SCAP-SREBP complex composed of SREBF2, SCAP and RNF139; the complex hampers the interaction between SCAP and SEC24B, thereby reducing SREBF2 proteolytic processing. Interacts with SREBF2 (via C-terminal domain). Interacts with SCAP; the interaction inhibits the interaction of SCAP with SEC24B and hampering the ER to Golgi transport of the SCAP-SREBP complex. Interacts with SEC24B. Interacts with INSIG1 and INSIG2. Interacts with EIF3F and EIF3H; the interaction leads to protein translation inhibitions in a ubiquitination-dependent manner. Interacts with XBP1 isoform 1; the interaction induces ubiquitination and degradation of XBP1 isoform 1. Interacts with AUP1, AMFR and UBE2G2; interaction with AUP1 facilitates interaction of RNF139 with ubiquitin-conjugating enzyme UBE2G2 and ubiquitin ligase AMFR/gp78, leading to sterol-induced ubiquitination of HMGCR and its subsequent proteasomal degradation. Post-translationally, autoubiquitinated. Ubiquitination is induced by sterol and leads to ist degradation via the ubiquitin-proteasome pathway. As to expression, highly expressed in testis, placenta and adrenal gland. Moderate expression in heart, brain, liver, skeletal muscle and pancreas, and low expression in lung and kidney.

The protein resides in the endoplasmic reticulum membrane. The enzyme catalyses S-ubiquitinyl-[E2 ubiquitin-conjugating enzyme]-L-cysteine + [acceptor protein]-L-lysine = [E2 ubiquitin-conjugating enzyme]-L-cysteine + N(6)-ubiquitinyl-[acceptor protein]-L-lysine.. It participates in protein modification; protein ubiquitination. Functionally, E3-ubiquitin ligase; acts as a negative regulator of cell proliferation through mechanisms involving G2/M arrest and cell death. Required for MHC class I ubiquitination in cells expressing the cytomegalovirus protein US2 before dislocation from the endoplasmic reticulum (ER). Affects SREBP processing by hindering the SREBP-SCAP complex translocation from the ER to the Golgi, thereby reducing SREBF2 target gene expression. Involved in the sterol-accelerated degradation of HMGCR. This is achieved through binding of RNF139 to INSIG1 and/or INSIG2 at the ER membrane. In addition, interaction of RNF139 with AUP1 facilitates interaction of RNF139 with ubiquitin-conjugating enzyme UBE2G2 and ubiquitin ligase AMFR, leading to ubiquitination of HMGCR. The ubiquitinated HMGCR is then released from the ER into the cytosol for subsequent destruction. Required for INSIG1 ubiquitination. May be required for EIF3 complex ubiquitination. This is E3 ubiquitin-protein ligase RNF139 from Homo sapiens (Human).